The following is a 108-amino-acid chain: Small ribosomal subunit protein uS17 (108 aa).

Belongs to the universal ribosomal protein uS17 family. As to quaternary structure, part of the 30S ribosomal subunit.

Its function is as follows. One of the primary rRNA binding proteins, it binds specifically to the 5'-end of 16S ribosomal RNA. This is Small ribosomal subunit protein uS17 from Methanoregula boonei (strain DSM 21154 / JCM 14090 / 6A8).